A 419-amino-acid polypeptide reads, in one-letter code: Peptide chain release factor subunit 1 (419 aa).

The protein belongs to the eukaryotic release factor 1 family. Heterodimer of two subunits, one of which binds GTP.

The protein localises to the cytoplasm. Its function is as follows. Directs the termination of nascent peptide synthesis (translation) in response to the termination codons UAA, UAG and UGA. This is Peptide chain release factor subunit 1 from Methanococcus maripaludis (strain DSM 14266 / JCM 13030 / NBRC 101832 / S2 / LL).